The chain runs to 66 residues: Large ribosomal subunit protein bL31 (66 aa).

Zn(2+)-binding residues include cysteine 16, cysteine 18, cysteine 36, and cysteine 39.

Belongs to the bacterial ribosomal protein bL31 family. Type A subfamily. As to quaternary structure, part of the 50S ribosomal subunit. Zn(2+) serves as cofactor.

Its function is as follows. Binds the 23S rRNA. The polypeptide is Large ribosomal subunit protein bL31 (Nautilia profundicola (strain ATCC BAA-1463 / DSM 18972 / AmH)).